The primary structure comprises 407 residues: Putative replication protein A (407 aa).

It belongs to the ParA family.

This is Putative replication protein A from Sinorhizobium fredii (strain NBRC 101917 / NGR234).